Here is a 375-residue protein sequence, read N- to C-terminus: POU domain, class 3, transcription factor 1 (375 aa).

Disordered regions lie at residues 1–29 (MAATAQYLPRNNSLPSNPLMHPDSDRMHQ), 56–139 (MSLT…QPLI), and 151–200 (MLGP…PSSD). Polar residues-rich tracts occupy residues 107–117 (VHQQTPSSHAW), 130–139 (PGSNSHQPLI), and 151–160 (MLGPQASSLH). A compositionally biased stretch (basic and acidic residues) spans 162–171 (SMRDPLHDDP). Residues 194–268 (EDAPSSDDLE…LLNKWLEETD (75 aa)) form the POU-specific domain. Residues 286 to 345 (KRKKRTSIEVGVKGALENHFLKCPKPSAHEITSLADSLQLEKEVVRVWFCNRRQKEKRMT) constitute a DNA-binding region (homeobox).

This sequence belongs to the POU transcription factor family. Class-3 subfamily.

Its subcellular location is the nucleus. Functionally, acts as a transcription factor. May play a role in neuronal differentiation. This chain is POU domain, class 3, transcription factor 1, found in Xenopus tropicalis (Western clawed frog).